The primary structure comprises 881 residues: Dynamin-like GTPase MGM1, mitochondrial (881 aa).

Residues 1-59 (MNASPVRLLILRRQLATHPAILYSSPYIKSPLVHLHSRMSNVHRSAHANALSFVITRRS) constitute a mitochondrion transit peptide. Residues 60–72 (ISHFPKIISKIIR) are Mitochondrial matrix-facing. Residues 73–92 (LPIYVGGGMAAAGSYIAYKM) traverse the membrane as a helical; Signal-anchor for type II membrane protein segment. Topologically, residues 93-881 (EEASSFTKDK…KSYKGVSKNL (789 aa)) are mitochondrial intermembrane. The segment at 145-183 (ATSLDDDESKRQGDPKDDDDEDDDDEDDENDSVDTTQDE) is disordered. Positions 160 to 176 (KDDDDEDDDDEDDENDS) are enriched in acidic residues. Residues 207-505 (HLTLPSIVVI…LEISMSNALE (299 aa)) enclose the Dynamin-type G domain. The interval 217 to 224 (GSQSSGKS) is G1 motif. Residues serine 220, serine 221, glycine 222, lysine 223, serine 224, serine 225, and glycine 239 each coordinate GTP. Serine 224 contributes to the Mg(2+) binding site. The interval 243–245 (VTR) is G2 motif. Mg(2+)-binding residues include threonine 244 and aspartate 317. Residues 317–320 (DLPG) are G3 motif. The interval 385 to 388 (TKLD) is G4 motif. Residues lysine 386, aspartate 388, and threonine 415 each contribute to the GTP site. Residues 414-417 (ITKT) form a G5 motif region. The interval 668-780 (STADQVENCI…KMLKNKCHST (113 aa)) is paddle region. The cysteines at positions 777 and 786 are disulfide-linked. The GED domain maps to 780-872 (TIEKDRCPEV…KIDSILVFKK (93 aa)).

The protein belongs to the TRAFAC class dynamin-like GTPase superfamily. Dynamin/Fzo/YdjA family. Oligomeric complex consisting of membrane-bound and soluble forms of MGM1. Associates with FZO1 through interaction with the intermembrane space domain of UGO1 which binds FZO1 through its cytoplasmic domain. Cleavage of the transit peptide by mitochondrial processing protease (MPP) produces a long integral membrane form of MGM1 (l-MGM1). Further processing by the rhomboid protease PCP1 produces a short peripheral membrane form of MGM1 (s-MGM1). Both isoforms are required for full activity.

It is found in the mitochondrion inner membrane. The protein resides in the mitochondrion intermembrane space. It catalyses the reaction GTP + H2O = GDP + phosphate + H(+). Dynamin-related GTPase that is essential for normal mitochondrial morphology by mediating fusion of the mitochondrial inner membranes, regulating cristae morphology and maintaining respiratory chain function. Exists in two forms: the transmembrane, long form (Dynamin-like GTPase MGM1, long form; L-MGM1), which is tethered to the inner mitochondrial membrane, and the short soluble form (Dynamin-like GTPase MGM1, short form; S-MGM1), which results from proteolytic cleavage and localizes in the intermembrane space. Both forms (L-MGM1 and S-MGM1) cooperate to catalyze the fusion of the mitochondrial inner membrane. The equilibrium between L-MGM1 and S-MGM1 is essential: excess levels of S-MGM1, following loss of mitochondrial membrane potential, lead to an impaired equilibrium between L-MGM1 and S-MGM1, inhibiting mitochondrial fusion. Plays a role in the maintenance and remodeling of mitochondrial cristae, some invaginations of the mitochondrial inner membrane that provide an increase in the surface area. Probably acts by forming helical filaments at the inside of inner membrane tubes with the shape and dimensions of crista junctions. In terms of biological role, constitutes the transmembrane long form (L-MGM1) that plays a central role in mitochondrial inner membrane fusion and cristae morphology. L-MGM1 and the soluble short form (S-MGM1) form higher-order helical assemblies that coordinate the fusion of mitochondrial inner membranes. Inner membrane-anchored L-MGM1 molecules initiate membrane remodeling by recruiting soluble S-MGM1 to rapidly polymerize into a flexible cylindrical scaffold encaging the mitochondrial inner membrane. Once at the membrane surface, the formation of S-MGM1 helices induce bilayer curvature. MGM1 dimerization through the paddle region, which inserts into cardiolipin-containing membrane, promotes GTP hydrolysis and the helical assembly of a flexible MGM1 lattice on the membrane, which drives membrane curvature and mitochondrial fusion. Functionally, constitutes the soluble short form (S-MGM1) generated by cleavage by PCP1, which plays a central role in mitochondrial inner membrane fusion and cristae morphology. The transmembrane long form (L-MGM1) and the S-MGM1 form higher-order helical assemblies that coordinate the fusion of mitochondrial inner membranes. Inner membrane-anchored L-MGM1 molecules initiate membrane remodeling by recruiting soluble S-MGM1 to rapidly polymerize into a flexible cylindrical scaffold encaging the mitochondrial inner membrane. Once at the membrane surface, the formation of S-MGM1 helices induce bilayer curvature. MGM1 dimerization through the paddle region, which inserts into cardiolipin-containing membrane, promotes GTP hydrolysis and the helical assembly of a flexible MGM1 lattice on the membrane, which drives membrane curvature and mitochondrial fusion. Excess levels of S-MGM1 produced by cleavage by PCP1 following stress conditions that induce loss of mitochondrial membrane potential, lead to an impaired equilibrium between L-MGM1 and S-MGM1, thereby inhibiting mitochondrial fusion. The protein is Dynamin-like GTPase MGM1, mitochondrial of Saccharomyces cerevisiae (strain ATCC 204508 / S288c) (Baker's yeast).